Here is a 148-residue protein sequence, read N- to C-terminus: UPF0179 protein Mevan_0979 (148 aa).

This sequence belongs to the UPF0179 family.

The chain is UPF0179 protein Mevan_0979 from Methanococcus vannielii (strain ATCC 35089 / DSM 1224 / JCM 13029 / OCM 148 / SB).